The primary structure comprises 359 residues: tRNA-specific 2-thiouridylase MnmA (359 aa).

ATP-binding positions include 6 to 13 (AMSGGVDS) and Leu-32. Cys-101 (nucleophile) is an active-site residue. A disulfide bridge connects residues Cys-101 and Cys-193. Position 125 (Gly-125) interacts with ATP. Residues 143–145 (KDQ) are interaction with tRNA. Catalysis depends on Cys-193, which acts as the Cysteine persulfide intermediate.

The protein belongs to the MnmA/TRMU family.

Its subcellular location is the cytoplasm. It carries out the reaction S-sulfanyl-L-cysteinyl-[protein] + uridine(34) in tRNA + AH2 + ATP = 2-thiouridine(34) in tRNA + L-cysteinyl-[protein] + A + AMP + diphosphate + H(+). Its function is as follows. Catalyzes the 2-thiolation of uridine at the wobble position (U34) of tRNA, leading to the formation of s(2)U34. The protein is tRNA-specific 2-thiouridylase MnmA of Mycobacterium sp. (strain KMS).